The primary structure comprises 239 residues: ATP-dependent dethiobiotin synthetase BioD (239 aa).

An ATP-binding site is contributed by 15–20; it reads EIGKTF. Thr19 is a binding site for Mg(2+). Residue Lys40 is part of the active site. Residues Asp57, 118-121, 178-179, and 211-213 contribute to the ATP site; these read EGVG, NH, and AHL. Asp57 and Glu118 together coordinate Mg(2+).

This sequence belongs to the dethiobiotin synthetase family. As to quaternary structure, homodimer. Requires Mg(2+) as cofactor.

It localises to the cytoplasm. The enzyme catalyses (7R,8S)-7,8-diammoniononanoate + CO2 + ATP = (4R,5S)-dethiobiotin + ADP + phosphate + 3 H(+). The protein operates within cofactor biosynthesis; biotin biosynthesis; biotin from 7,8-diaminononanoate: step 1/2. In terms of biological role, catalyzes a mechanistically unusual reaction, the ATP-dependent insertion of CO2 between the N7 and N8 nitrogen atoms of 7,8-diaminopelargonic acid (DAPA, also called 7,8-diammoniononanoate) to form a ureido ring. The protein is ATP-dependent dethiobiotin synthetase BioD of Burkholderia vietnamiensis (strain G4 / LMG 22486) (Burkholderia cepacia (strain R1808)).